The primary structure comprises 423 residues: Polyglutamylase complex subunit TTLL1 (423 aa).

In terms of domain architecture, TTL spans 1–367 (MAGKVKWVTD…NGEIPDCKWN (367 aa)). Residues lysine 138, 144–145 (QG), 181–184 (SLYI), and 194–196 (KFD) each bind ATP. Glutamine 144 provides a ligand contact to a protein. Arginine 220 is a binding site for L-glutamate. Residue 241–242 (TN) participates in ATP binding. Lysine 259 lines the L-glutamate pocket. Mg(2+)-binding residues include aspartate 313, glutamate 326, and asparagine 328. Residue lysine 344 coordinates L-glutamate. A disordered region spans residues 391–423 (GAERELRSRPGQSLGPKGSRLRDAGRTVLTTWK).

It belongs to the tubulin polyglutamylase family. As to quaternary structure, part of the neuronal tubulin polyglutamylase complex which contains TPGS1, TPGS2, TTLL1, LRRC49 and NICN1. Interacts with PCM1, CSTPP1 and LRRC49. The cofactor is Mg(2+).

Its subcellular location is the cytoplasm. The protein localises to the cytoskeleton. The protein resides in the cilium basal body. It localises to the cilium axoneme. It is found in the cell projection. Its subcellular location is the cilium. The protein localises to the flagellum. It carries out the reaction (L-glutamyl)(n)-gamma-L-glutamyl-L-glutamyl-[protein] + L-glutamate + ATP = (L-glutamyl)(n+1)-gamma-L-glutamyl-L-glutamyl-[protein] + ADP + phosphate + H(+). Functionally, catalytic subunit of a polyglutamylase complex which modifies tubulin, generating side chains of glutamate on the gamma-carboxyl group of specific glutamate residues within the C-terminal tail of tubulin. Probably involved in the side-chain elongation step of the polyglutamylation reaction rather than the initiation step. Modifies both alpha- and beta-tubulins with a preference for the alpha-tail. Unlike most polyglutamylases of the tubulin--tyrosine ligase family, only displays a catalytic activity when in complex with other proteins as it is most likely lacking domains important for autonomous activity. Part of the neuronal tubulin polyglutamylase complex. Mediates cilia and flagella polyglutamylation which is essential for their biogenesis and motility. Involved in respiratory motile cilia function through the regulation of beating asymmetry. Essential for sperm flagella biogenesis, motility and male fertility. Involved in KLF4 glutamylation which impedes its ubiquitination, thereby leading to somatic cell reprogramming, pluripotency maintenance and embryogenesis. This chain is Polyglutamylase complex subunit TTLL1 (TTLL1), found in Bos taurus (Bovine).